Consider the following 337-residue polypeptide: Serpentine receptor class delta-18 (337 aa).

Transmembrane regions (helical) follow at residues I2–L22, V90–F110, L130–A150, I187–L207, A236–L256, and S270–V290.

It belongs to the nematode receptor-like protein srd family.

The protein localises to the membrane. The protein is Serpentine receptor class delta-18 (srd-18) of Caenorhabditis elegans.